A 34-amino-acid polypeptide reads, in one-letter code: Brevinin-2Rf (34 aa).

Cys28 and Cys34 are oxidised to a cystine.

As to expression, expressed by the skin glands.

Its subcellular location is the secreted. Functionally, antimicrobial peptide. In Pelophylax ridibundus (Marsh frog), this protein is Brevinin-2Rf.